The primary structure comprises 286 residues: ATP synthase gamma chain (286 aa).

Belongs to the ATPase gamma chain family. F-type ATPases have 2 components, CF(1) - the catalytic core - and CF(0) - the membrane proton channel. CF(1) has five subunits: alpha(3), beta(3), gamma(1), delta(1), epsilon(1). CF(0) has three main subunits: a, b and c.

The protein resides in the cell inner membrane. Produces ATP from ADP in the presence of a proton gradient across the membrane. The gamma chain is believed to be important in regulating ATPase activity and the flow of protons through the CF(0) complex. The polypeptide is ATP synthase gamma chain (Shewanella sp. (strain MR-4)).